A 475-amino-acid polypeptide reads, in one-letter code: Cytochrome P450 monooxygenase opdE (475 aa).

The helical transmembrane segment at 10 to 32 threads the bilayer; it reads VQNIPVLLLSCGFLAILFRSLVL. Cys-457 contributes to the heme binding site.

This sequence belongs to the cytochrome P450 family. Requires heme as cofactor.

The protein localises to the membrane. It participates in secondary metabolite biosynthesis. In terms of biological role, cytochrome P450 monooxygenase; part of the gene cluster that mediates the biosynthesis of oxopyrrolidines, polyketide-amino acid hybrid compounds with feature structures of tetramic acid. Does not seem to play a role in oxopyrrolidines A and B biosynthesis. May be involved in further modifications of these oxopyrrolidines. This Penicillium oxalicum (strain 114-2 / CGMCC 5302) (Penicillium decumbens) protein is Cytochrome P450 monooxygenase opdE.